The following is a 534-amino-acid chain: Paired box protein Pax-1 (534 aa).

A DNA-binding region (paired) is located at residues 98–224; that stretch reads TYGEVNQLGG…SSISRILRNK (127 aa). A PAI subdomain region spans residues 101 to 157; that stretch reads EVNQLGGVFVNGRPLPNAIRLRIVELAQLGIRPCDISRQLRVSHGCVSKILARYNET. Positions 176–224 are RED subdomain; it reads NVVKHIRDYKQGDPGIFAWEIRDRLLADGVCDKYNVPSVSSISRILRNK. 2 disordered regions span residues 424-480 and 492-511; these read PSRE…AAAP and EEEA…QAQP.

Its subcellular location is the nucleus. Functionally, this protein is a transcriptional activator. It may play a role in the formation of segmented structures of the embryo. May play an important role in the normal development of the vertebral column. This chain is Paired box protein Pax-1 (PAX1), found in Homo sapiens (Human).